We begin with the raw amino-acid sequence, 741 residues long: NAD(P)H-quinone oxidoreductase subunit 5, chloroplastic (741 aa).

16 helical membrane passes run 9 to 29 (WIIPFLPLPVPMLIGLGLLLF), 40 to 60 (WAFQSVLLLSIVMIFSMNLSI), 89 to 109 (IDPLTSIMSILITTVGILVLI), 125 to 145 (FAYMSFFSTSMLGLVTSSNLI), 147 to 167 (IYIFWELVGMCSYLLIGFWFT), 185 to 205 (GDFGLLLGILGFYWITGSFEF), 219 to 239 (NQVNFLFVTLCAVLLFAGAIA), 258 to 278 (TPISALIHAATMVAAGIFLVA), 289 to 311 (HIMNFISLIGIITVFLGATLALA), 327 to 347 (LGYMMLALGMGSYRSALFHLI), 354 to 374 (ALLFLGSGSVIHSMETLVGYC), 396 to 416 (NSFLLGTLSLCGIPPLACFWS), 425 to 445 (WLYSPIFAIIAWSTAGLTAFY), 549 to 569 (LFPILILFIFTLFVGFLGIPL), 605 to 625 (LFSVSIASFGIFIAFFLYKPV), and 721 to 741 (YLFFYFSYVSIFLVIYYFLNL).

The protein belongs to the complex I subunit 5 family. As to quaternary structure, NDH is composed of at least 16 different subunits, 5 of which are encoded in the nucleus.

The protein resides in the plastid. The protein localises to the chloroplast thylakoid membrane. The enzyme catalyses a plastoquinone + NADH + (n+1) H(+)(in) = a plastoquinol + NAD(+) + n H(+)(out). It catalyses the reaction a plastoquinone + NADPH + (n+1) H(+)(in) = a plastoquinol + NADP(+) + n H(+)(out). Functionally, NDH shuttles electrons from NAD(P)H:plastoquinone, via FMN and iron-sulfur (Fe-S) centers, to quinones in the photosynthetic chain and possibly in a chloroplast respiratory chain. The immediate electron acceptor for the enzyme in this species is believed to be plastoquinone. Couples the redox reaction to proton translocation, and thus conserves the redox energy in a proton gradient. The polypeptide is NAD(P)H-quinone oxidoreductase subunit 5, chloroplastic (ndhF) (Symphyotrichum cordifolium (Heart-leaved aster)).